Consider the following 466-residue polypeptide: Phosphomethylpyrimidine synthase (466 aa).

Substrate contacts are provided by residues asparagine 80, methionine 109, tyrosine 139, histidine 175, 195–197 (SRG), 236–239 (DSLR), and glutamate 275. Histidine 279 is a binding site for Zn(2+). Residue tyrosine 302 participates in substrate binding. Position 343 (histidine 343) interacts with Zn(2+). 3 residues coordinate [4Fe-4S] cluster: cysteine 423, cysteine 426, and cysteine 431.

This sequence belongs to the ThiC family. The cofactor is [4Fe-4S] cluster.

The catalysed reaction is 5-amino-1-(5-phospho-beta-D-ribosyl)imidazole + S-adenosyl-L-methionine = 4-amino-2-methyl-5-(phosphooxymethyl)pyrimidine + CO + 5'-deoxyadenosine + formate + L-methionine + 3 H(+). It functions in the pathway cofactor biosynthesis; thiamine diphosphate biosynthesis. In terms of biological role, catalyzes the synthesis of the hydroxymethylpyrimidine phosphate (HMP-P) moiety of thiamine from aminoimidazole ribotide (AIR) in a radical S-adenosyl-L-methionine (SAM)-dependent reaction. The protein is Phosphomethylpyrimidine synthase of Prochlorococcus marinus (strain NATL1A).